A 203-amino-acid polypeptide reads, in one-letter code: NADH-quinone oxidoreductase subunit C (203 aa).

It belongs to the complex I 30 kDa subunit family. In terms of assembly, NDH-1 is composed of 14 different subunits. Subunits NuoB, C, D, E, F, and G constitute the peripheral sector of the complex.

Its subcellular location is the cell inner membrane. The enzyme catalyses a quinone + NADH + 5 H(+)(in) = a quinol + NAD(+) + 4 H(+)(out). Its function is as follows. NDH-1 shuttles electrons from NADH, via FMN and iron-sulfur (Fe-S) centers, to quinones in the respiratory chain. The immediate electron acceptor for the enzyme in this species is believed to be ubiquinone. Couples the redox reaction to proton translocation (for every two electrons transferred, four hydrogen ions are translocated across the cytoplasmic membrane), and thus conserves the redox energy in a proton gradient. In Verminephrobacter eiseniae (strain EF01-2), this protein is NADH-quinone oxidoreductase subunit C.